Here is a 302-residue protein sequence, read N- to C-terminus: Sulfate adenylyltransferase subunit 2 (302 aa).

Belongs to the PAPS reductase family. CysD subfamily. In terms of assembly, heterodimer composed of CysD, the smaller subunit, and CysN.

The catalysed reaction is sulfate + ATP + H(+) = adenosine 5'-phosphosulfate + diphosphate. It functions in the pathway sulfur metabolism; hydrogen sulfide biosynthesis; sulfite from sulfate: step 1/3. With CysN forms the ATP sulfurylase (ATPS) that catalyzes the adenylation of sulfate producing adenosine 5'-phosphosulfate (APS) and diphosphate, the first enzymatic step in sulfur assimilation pathway. APS synthesis involves the formation of a high-energy phosphoric-sulfuric acid anhydride bond driven by GTP hydrolysis by CysN coupled to ATP hydrolysis by CysD. The chain is Sulfate adenylyltransferase subunit 2 from Escherichia coli O9:H4 (strain HS).